The sequence spans 182 residues: Large ribosomal subunit protein uL5 (182 aa).

This sequence belongs to the universal ribosomal protein uL5 family. Part of the 50S ribosomal subunit; part of the 5S rRNA/L5/L18/L25 subcomplex. Contacts the 5S rRNA and the P site tRNA. Forms a bridge to the 30S subunit in the 70S ribosome.

This is one of the proteins that bind and probably mediate the attachment of the 5S RNA into the large ribosomal subunit, where it forms part of the central protuberance. In the 70S ribosome it contacts protein S13 of the 30S subunit (bridge B1b), connecting the 2 subunits; this bridge is implicated in subunit movement. Contacts the P site tRNA; the 5S rRNA and some of its associated proteins might help stabilize positioning of ribosome-bound tRNAs. This chain is Large ribosomal subunit protein uL5, found in Borreliella burgdorferi (strain ATCC 35210 / DSM 4680 / CIP 102532 / B31) (Borrelia burgdorferi).